The sequence spans 326 residues: Mitochondrial glycine transporter (326 aa).

Solcar repeat units follow at residues His-45–Tyr-134, Pro-141–Thr-225, and Leu-237–Lys-321. The next 6 membrane-spanning stretches (helical) occupy residues Phe-51 to Gln-76, Gly-109 to Phe-135, Val-147 to Glu-172, Gly-200 to Arg-223, Val-241 to Met-267, and Gly-296 to Val-314.

The protein belongs to the mitochondrial carrier (TC 2.A.29) family. SLC25A38 subfamily.

The protein localises to the mitochondrion inner membrane. It carries out the reaction glycine(in) = glycine(out). In terms of biological role, mitochondrial glycine transporter that imports glycine into the mitochondrial matrix. Plays an important role in providing glycine for the first enzymatic step in heme biosynthesis, the condensation of glycine with succinyl-CoA to produce 5-aminolevulinate (ALA) in the mitochondrial matrix. Required during erythropoiesis. Its function is as follows. Plays a role as pro-apoptotic protein that induces caspase-dependent apoptosis. The sequence is that of Mitochondrial glycine transporter from Rattus norvegicus (Rat).